The following is a 484-amino-acid chain: Glutathione reductase (484 aa).

FAD is bound by residues Ser-32 and Gly-33. Ser-32 contributes to the glutathione binding site. A glutathione-binding site is contributed by Arg-39. FAD contacts are provided by Glu-52, Thr-59, Cys-60, and Lys-68. Cys-60 and Cys-65 are joined by a disulfide. Tyr-122 is a glutathione binding site. Residue Ala-138 participates in FAD binding. NADP(+) is bound by residues Ala-204, Ile-207, Glu-210, Arg-227, and Arg-233. Thr-242 contacts glutathione. Gly-293 is a binding site for NADP(+). Asp-333 is a binding site for FAD. Glu-339 is an NADP(+) binding site. Thr-341 is an FAD binding site. Arg-349 is a glutathione binding site. An NADP(+)-binding site is contributed by Val-374. Lys-426 provides a ligand contact to glutathione. An FAD-binding site is contributed by His-473. His-473 (proton acceptor) is an active-site residue.

Belongs to the class-I pyridine nucleotide-disulfide oxidoreductase family. As to quaternary structure, homodimer. The cofactor is FAD.

Its subcellular location is the cytoplasm. It localises to the mitochondrion. The catalysed reaction is 2 glutathione + NADP(+) = glutathione disulfide + NADPH + H(+). Its function is as follows. Catalyzes the reduction of glutathione disulfide (GSSG) to reduced glutathione (GSH). Constitutes the major mechanism to maintain a high GSH:GSSG ratio in the cytosol. The protein is Glutathione reductase (GLR1) of Kluyveromyces lactis (strain ATCC 8585 / CBS 2359 / DSM 70799 / NBRC 1267 / NRRL Y-1140 / WM37) (Yeast).